The sequence spans 258 residues: Trans-aconitate 2-methyltransferase (258 aa).

Belongs to the methyltransferase superfamily. Tam family.

The protein localises to the cytoplasm. It catalyses the reaction trans-aconitate + S-adenosyl-L-methionine = (E)-3-(methoxycarbonyl)pent-2-enedioate + S-adenosyl-L-homocysteine. Its function is as follows. Catalyzes the S-adenosylmethionine monomethyl esterification of trans-aconitate. The protein is Trans-aconitate 2-methyltransferase of Yersinia pseudotuberculosis serotype O:1b (strain IP 31758).